The following is a 704-amino-acid chain: Pentatricopeptide repeat-containing protein At1g56690, mitochondrial (704 aa).

Residues 1-12 constitute a mitochondrion transit peptide; it reads MKRLKLILRRTY. PPR repeat units follow at residues 16 to 46, 47 to 81, 82 to 108, 109 to 143, 144 to 170, 171 to 205, 206 to 232, 233 to 267, 268 to 294, 295 to 329, 330 to 364, 365 to 395, 396 to 430, 431 to 465, and 467 to 497; these read TGVN…LQFK, AIGS…NVVS, WNGL…MPER, NVVS…NEVS, WTVM…MPVK, DVVA…NVVT, WTTM…MPEK, TEVS…PVIA, CNAM…MEDR, DNAT…GVRP, SFPS…QFDD, DVYV…FSSK, DIIM…GTMP, NKVT…FCVT, and TVEH…MTIK. Residues 502–577 are type E motif; the sequence is VWGALLGACK…FPGCSWIEVG (76 aa). The tract at residues 578–609 is type E(+) motif; sequence KKVHMFTRGGIKNHPEQAMILMMLEKTDGLLR. The interval 610–704 is type DYW motif; that stretch reads EAGYSPDCSH…NGECSCRDYW (95 aa).

This sequence belongs to the PPR family. PCMP-H subfamily.

It is found in the mitochondrion. This is Pentatricopeptide repeat-containing protein At1g56690, mitochondrial (PCMP-H69) from Arabidopsis thaliana (Mouse-ear cress).